Consider the following 156-residue polypeptide: AP-1 complex subunit sigma-1 (156 aa).

Belongs to the adaptor complexes small subunit family. In terms of assembly, adapter protein complex 1 (AP-1) is a heterotetramer composed of two large adaptins (gamma-type subunit APL4 and beta-type subunit APL2), a medium adaptin (mu-type subunit APM1) and a small adaptin (sigma-type subunit APS1). AP-1 interacts with clathrin. Also a component of the AP-1R complex composed of at least APM2, APL4 and APS1.

It is found in the cytoplasm. Its subcellular location is the nucleus. The protein localises to the cytoplasmic vesicle. The protein resides in the clathrin-coated vesicle membrane. It localises to the endosome. It is found in the golgi apparatus. Functionally, component of the adapter complexes which link clathrin to receptors in coated vesicles. Clathrin-associated protein complexes are believed to interact with the cytoplasmic tails of membrane proteins, leading to their selection and concentration. AP19 is probably a subunit of the Golgi membrane adapter. Component of the AP-1-related (AP-1R) complex, an adapter protein complex that mediates sorting of cargo SNARE SNC1. In contrast to the APM1-containing AP-1 complex, AP-1R is incapable of sorting CHS3. The protein is AP-1 complex subunit sigma-1 (APS1) of Saccharomyces cerevisiae (strain ATCC 204508 / S288c) (Baker's yeast).